We begin with the raw amino-acid sequence, 417 residues long: Serine hydroxymethyltransferase (417 aa).

Residues Leu120 and 124-126 (GHL) contribute to the (6S)-5,6,7,8-tetrahydrofolate site. At Lys229 the chain carries N6-(pyridoxal phosphate)lysine.

It belongs to the SHMT family. In terms of assembly, homodimer. It depends on pyridoxal 5'-phosphate as a cofactor.

The protein resides in the cytoplasm. The enzyme catalyses (6R)-5,10-methylene-5,6,7,8-tetrahydrofolate + glycine + H2O = (6S)-5,6,7,8-tetrahydrofolate + L-serine. The protein operates within one-carbon metabolism; tetrahydrofolate interconversion. Its pathway is amino-acid biosynthesis; glycine biosynthesis; glycine from L-serine: step 1/1. Catalyzes the reversible interconversion of serine and glycine with tetrahydrofolate (THF) serving as the one-carbon carrier. This reaction serves as the major source of one-carbon groups required for the biosynthesis of purines, thymidylate, methionine, and other important biomolecules. Also exhibits THF-independent aldolase activity toward beta-hydroxyamino acids, producing glycine and aldehydes, via a retro-aldol mechanism. This Anaeromyxobacter sp. (strain Fw109-5) protein is Serine hydroxymethyltransferase.